The chain runs to 919 residues: MTQEINKNYNPKEIEQANYQNWEASGKFACGNTDSKDTYTIMLPPPNVTGTLHMGHGFQMSLMDILIRYNRMSGKDTLWQPGTDHAGIATQMVVERQLNAQGISRHDLGRENFVSKVWEWKELSGGTITSQMRRIGASPDWDRERFTMDKGLSDAVKKCFIKLYEDGLAYRGERLVNWDPKLKTAVSDLEVAQVDKQGSLWHFIYPVADSDEKIIIATTRPETMLGDMAVAVHPEDERYTHLVGKMINLPLTDRQIPIIADDYVEKDFGTGCVKITPAHDFNDYEMGKRHNLPMLNILTDDATLNTNVPSKYQGLDRFEARKQVVADMEALGLLDKIEPHALKVPTGDRTGEILEPYLTKQWFVKADVLAKPAIEAVEKGDVRFVPDNWKNTYFAWMRDIQDWCVSRQLWWGHRIPAWYDEAGNAYVGEDEADVRAKYNLADDIAIKQDEDVFDTWFSSALWPFSTLGWPEQTPELAKYYPTSVLVTGFDIIFFWVARMMMFGMYFMNDVPFRDIYITGLIRDSEGQKMSKSKGNVLDPVDLIDGISLDELLKKRTTGLMQPQMKAKIEKATKKEFPEGISAYGADAVRFTYAALASTSRDISFDTARVEGYRNFCNKLWNASRFVMMNLDDYKVCDNYELGVADKWIWSVLNTATADVHRHLANYRFDLVTNTIYDLVWNNYCDWYVEFAKVALKDDSLSEQQKNGVKYTLTKVLENILALAHPLIPFITESIYQQLKAHLNDAKDTIMDVSYPVATQALEAPEAEKAIVWLQNVVTTLRNMRSEVGIKPSLEISLIVKDVADKDREYLAQTEGFIKALARINNIEFNDNPPTSLSQIVEGLELNIPLAGLVDIEAEKARLDKELDKLKDEVDRVQKKLSNERFVSNAPEAVVAAEQEKLAKYQELYAKTLEKKEALG.

A 'HIGH' region motif is present at residues proline 46–histidine 56. The short motif at lysine 528–serine 532 is the 'KMSKS' region element. Lysine 531 is a binding site for ATP. A coiled-coil region spans residues leucine 849–glycine 919.

The protein belongs to the class-I aminoacyl-tRNA synthetase family. ValS type 1 subfamily. Monomer.

The protein localises to the cytoplasm. The catalysed reaction is tRNA(Val) + L-valine + ATP = L-valyl-tRNA(Val) + AMP + diphosphate. Its function is as follows. Catalyzes the attachment of valine to tRNA(Val). As ValRS can inadvertently accommodate and process structurally similar amino acids such as threonine, to avoid such errors, it has a 'posttransfer' editing activity that hydrolyzes mischarged Thr-tRNA(Val) in a tRNA-dependent manner. The protein is Valine--tRNA ligase of Francisella tularensis subsp. tularensis (strain SCHU S4 / Schu 4).